The primary structure comprises 144 residues: Catabolic 3-dehydroquinase 1 (144 aa).

The active-site Proton acceptor is Tyr24. Substrate-binding residues include Asn75, His81, and Asp88. His101 (proton donor) is an active-site residue. Substrate contacts are provided by residues 102 to 103 (IS) and Arg112.

Belongs to the type-II 3-dehydroquinase family. As to quaternary structure, homododecamer. Adopts a ring-like structure, composed of an arrangement of two hexameric rings stacked on top of one another.

It catalyses the reaction 3-dehydroquinate = 3-dehydroshikimate + H2O. The protein operates within aromatic compound metabolism; 3,4-dihydroxybenzoate biosynthesis; 3,4-dihydroxybenzoate from 3-dehydroquinate: step 1/2. Is involved in the catabolism of quinate. Allows the utilization of quinate as carbon source via the beta-ketoadipate pathway. The chain is Catabolic 3-dehydroquinase 1 from Fusarium vanettenii (strain ATCC MYA-4622 / CBS 123669 / FGSC 9596 / NRRL 45880 / 77-13-4) (Fusarium solani subsp. pisi).